Consider the following 319-residue polypeptide: uncharacterized protein (319 aa).

The first 27 residues, M1–A27, serve as a signal peptide directing secretion. The NodB homology domain maps to P130–G306.

The protein belongs to the polysaccharide deacetylase family.

This is an uncharacterized protein from Bacillus subtilis (strain 168).